The following is a 2351-amino-acid chain: Coagulation factor VIII (2351 aa).

Positions 1–19 are cleaved as a signal peptide; the sequence is MQIELSTCFFLCLLRFCFS. Plastocyanin-like domains lie at 20 to 198 and 206 to 348; these read ATRR…LLVC and EKTQ…VDSC. The F5/8 type A 1 domain maps to 20-348; it reads ATRRYYLGAV…MEAYVKVDSC (329 aa). N-linked (GlcNAc...) asparagine glycosylation is present at Asn60. Cys172 and Cys198 are joined by a disulfide. Asn258 is a glycosylation site (N-linked (GlcNAc...) asparagine). Cys267 and Cys348 are oxidised to a cystine. Sulfotyrosine is present on Tyr365. Plastocyanin-like domains lie at 399–573 and 583–730; these read KTWV…LLIC and NQIM…VSSC. Positions 399 to 730 constitute an F5/8 type A 2 domain; sequence KTWVHYIAAE…MTALLKVSSC (332 aa). A disulfide bond links Cys547 and Cys573. N-linked (GlcNAc...) asparagine glycosylation is present at Asn601. Cys649 and Cys730 are disulfide-bonded. Sulfotyrosine occurs at positions 737, 738, and 742. The interval 760 to 1667 is b; the sequence is SFSQNSRHPS…NPPVLKRHQR (908 aa). N-linked (GlcNAc...) asparagine glycosylation is found at Asn776, Asn803, Asn847, and Asn919. Disordered stretches follow at residues 906–928 and 941–961; these read STIP…PPSM and FGKK…SEEN. Residues Asn962, Asn982, Asn1020, Asn1024, Asn1074, Asn1085, Asn1204, Asn1274, Asn1278, Asn1301, Asn1319, Asn1431, and Asn1461 are each glycosylated (N-linked (GlcNAc...) asparagine). Sulfotyrosine occurs at positions 1683 and 1699. Plastocyanin-like domains follow at residues 1713–1877 and 1887–2040; these read KTRH…LLVC and GRQV…SNKC. The F5/8 type A 3 domain occupies 1713 to 2040; the sequence is KTRHYFIAAV…TLFLVYSNKC (328 aa). An N-linked (GlcNAc...) asparagine glycan is attached at Asn1829. Intrachain disulfides connect Cys1851/Cys1877, Cys1918/Cys1922, Cys2040/Cys2188, and Cys2193/Cys2345. F5/8 type C domains follow at residues 2040–2188 and 2193–2345; these read CQTP…LMGC and CSMP…VLGC. An N-linked (GlcNAc...) asparagine glycan is attached at Asn2137.

Belongs to the multicopper oxidase family. As to quaternary structure, interacts with VWF/vWF. vWF binding is essential for the stabilization of F8 in circulation. Sulfation on Tyr-1699 is essential for binding vWF. In terms of processing, proteolytically cleaved by cathepsin CTSG to produce a partially activated form.

Its subcellular location is the secreted. The protein resides in the extracellular space. Functionally, factor VIII, along with calcium and phospholipid, acts as a cofactor for F9/factor IXa when it converts F10/factor X to the activated form, factor Xa. This Homo sapiens (Human) protein is Coagulation factor VIII (F8).